Consider the following 473-residue polypeptide: Photosystem II CP43 reaction center protein (473 aa).

The propeptide occupies 1 to 14 (MKTLYSLRRFYHVE). Thr15 is subject to N-acetylthreonine. A Phosphothreonine modification is found at Thr15. Helical transmembrane passes span 69 to 93 (LFEV…PHLA), 134 to 155 (LLGP…KDRN), 178 to 200 (KALY…RKIT), 255 to 275 (KPFA…LSYS), and 291 to 312 (WFNN…ASQA). [CaMn4O5] cluster is bound at residue Glu367. Residues 447-471 (RARAAAAGFEKGIDRDFEPVLSMTP) traverse the membrane as a helical segment.

It belongs to the PsbB/PsbC family. PsbC subfamily. As to quaternary structure, PSII is composed of 1 copy each of membrane proteins PsbA, PsbB, PsbC, PsbD, PsbE, PsbF, PsbH, PsbI, PsbJ, PsbK, PsbL, PsbM, PsbT, PsbX, PsbY, PsbZ, Psb30/Ycf12, at least 3 peripheral proteins of the oxygen-evolving complex and a large number of cofactors. It forms dimeric complexes. Requires Binds multiple chlorophylls and provides some of the ligands for the Ca-4Mn-5O cluster of the oxygen-evolving complex. It may also provide a ligand for a Cl- that is required for oxygen evolution. PSII binds additional chlorophylls, carotenoids and specific lipids. as cofactor.

It is found in the plastid. The protein resides in the chloroplast thylakoid membrane. One of the components of the core complex of photosystem II (PSII). It binds chlorophyll and helps catalyze the primary light-induced photochemical processes of PSII. PSII is a light-driven water:plastoquinone oxidoreductase, using light energy to abstract electrons from H(2)O, generating O(2) and a proton gradient subsequently used for ATP formation. This chain is Photosystem II CP43 reaction center protein, found in Ipomoea purpurea (Common morning glory).